Consider the following 1162-residue polypeptide: Protein OBERON 4 (1162 aa).

4 stretches are compositionally biased toward basic and acidic residues: residues 1–19, 61–77, 90–99, and 118–134; these read MKRLRSSDDLDFCNDKNVD, NRDLDNHRPDARYHRSE, FRSERERPNR, and VDDRDRRLRDAERDRSL. 4 disordered regions span residues 1 to 235, 251 to 307, 321 to 346, and 441 to 485; these read MKRL…PSCS, IGKS…VSQN, DHRDGTITASANKITDTVDEKGDKDE, and SKTE…QSGV. Residues 135-146 are compositionally biased toward polar residues; sequence KSPSWSRDSPNE. The span at 148–157 shows a compositional bias: basic and acidic residues; the sequence is SKFKPLDSRN. Over residues 163–182 the composition is skewed to polar residues; the sequence is KSLASPTWSKDSGSEQSKSV. Residues 203 to 213 show a composition bias toward acidic residues; it reads EMEEGELEPEP. Basic and acidic residues-rich tracts occupy residues 225-235, 263-300, 336-346, and 441-457; these read TKHDCKLPSCS, SNRELSHVGGNREMETTDSMTDKKSVEDAENVPEHATE, DTVDEKGDKDE, and SKTEDLHDKDKDEKDDN. The PHD-type zinc-finger motif lies at 835–899; that stretch reads ACMCLVCSNF…QFHCVACNHP (65 aa). The stretch at 1065–1161 forms a coiled coil; it reads MKQAEAEMFQ…KMEMTKQSLA (97 aa).

In terms of assembly, self-interacts. Interacts with OBE1 and OBE2. Interacts with OBE3.

It localises to the nucleus. Its function is as follows. Probable transcription factor that functions redundantly with OBE3 in specification of the hypophysis and establishment of the embryonic root. Involved in the activation of ARF5/MP-dependent gene expression during embryonic root meristem initiation. Involved in shoot meristem homeostasis. The polypeptide is Protein OBERON 4 (Arabidopsis thaliana (Mouse-ear cress)).